Reading from the N-terminus, the 433-residue chain is Serine--tRNA ligase (433 aa).

Residue 235–237 coordinates L-serine; that stretch reads TSE. 266–268 provides a ligand contact to ATP; sequence RSE. An L-serine-binding site is contributed by glutamate 289. 353-356 provides a ligand contact to ATP; the sequence is EISS. Serine 388 is an L-serine binding site.

Belongs to the class-II aminoacyl-tRNA synthetase family. Type-1 seryl-tRNA synthetase subfamily. As to quaternary structure, homodimer. The tRNA molecule binds across the dimer.

The protein localises to the cytoplasm. It carries out the reaction tRNA(Ser) + L-serine + ATP = L-seryl-tRNA(Ser) + AMP + diphosphate + H(+). The catalysed reaction is tRNA(Sec) + L-serine + ATP = L-seryl-tRNA(Sec) + AMP + diphosphate + H(+). The protein operates within aminoacyl-tRNA biosynthesis; selenocysteinyl-tRNA(Sec) biosynthesis; L-seryl-tRNA(Sec) from L-serine and tRNA(Sec): step 1/1. Catalyzes the attachment of serine to tRNA(Ser). Is also able to aminoacylate tRNA(Sec) with serine, to form the misacylated tRNA L-seryl-tRNA(Sec), which will be further converted into selenocysteinyl-tRNA(Sec). This chain is Serine--tRNA ligase, found in Burkholderia pseudomallei (strain 1106a).